The sequence spans 340 residues: Heat-inducible transcription repressor HrcA (340 aa).

Belongs to the HrcA family.

In terms of biological role, negative regulator of class I heat shock genes (grpE-dnaK-dnaJ and groELS operons). Prevents heat-shock induction of these operons. The chain is Heat-inducible transcription repressor HrcA from Chromobacterium violaceum (strain ATCC 12472 / DSM 30191 / JCM 1249 / CCUG 213 / NBRC 12614 / NCIMB 9131 / NCTC 9757 / MK).